The sequence spans 105 residues: Thiosulfate sulfurtransferase GlpE (105 aa).

The 89-residue stretch at 15–103 folds into the Rhodanese domain; it reads MQQGAILVDI…WCRAELPIDT (89 aa). Catalysis depends on cysteine 63, which acts as the Cysteine persulfide intermediate.

It belongs to the GlpE family.

Its subcellular location is the cytoplasm. The enzyme catalyses thiosulfate + hydrogen cyanide = thiocyanate + sulfite + 2 H(+). It catalyses the reaction thiosulfate + [thioredoxin]-dithiol = [thioredoxin]-disulfide + hydrogen sulfide + sulfite + 2 H(+). Functionally, transferase that catalyzes the transfer of sulfur from thiosulfate to thiophilic acceptors such as cyanide or dithiols. May function in a CysM-independent thiosulfate assimilation pathway by catalyzing the conversion of thiosulfate to sulfite, which can then be used for L-cysteine biosynthesis. The sequence is that of Thiosulfate sulfurtransferase GlpE from Haemophilus influenzae (strain PittEE).